The sequence spans 331 residues: GATA transcription factor 12 (331 aa).

Disordered regions lie at residues Glu30 to Phe49 and Ser105 to Ala138. The segment covering Val34–Ser47 has biased composition (low complexity). A compositionally biased stretch (polar residues) spans Asp116–Val134. Residues Lys139–Arg146 carry the Nuclear localization signal motif. The tract at residues Ser174–Glu218 is disordered. The GATA-type zinc finger occupies Gly215–Leu269.

This sequence belongs to the type IV zinc-finger family. Class A subfamily. As to expression, expressed in the vascular cylinder of roots. Expressed in the differentiation zone of the root stele.

Its subcellular location is the nucleus. Transcriptional activator that specifically binds 5'-GATA-3' or 5'-GAT-3' motifs within gene promoters. May be involved in the regulation of some light-responsive genes. Transcription activator involved in xylem formation. Functions upstream of NAC030/VND7, a master switch of xylem vessel differentiation. In Arabidopsis thaliana (Mouse-ear cress), this protein is GATA transcription factor 12.